The primary structure comprises 557 residues: Ubiquitin C-terminal hydrolase 22 (557 aa).

The UBP-type; degenerate zinc finger occupies 36-130; that stretch reads FRCFNDARIK…VSKQLFGLGM (95 aa). Cys-56, Cys-59, Cys-69, Cys-72, Cys-77, His-80, His-84, and His-91 together coordinate Zn(2+). In terms of domain architecture, USP spans 177–531; the sequence is RGLNNLGSTC…ECYMLFYAQE (355 aa). Cys-186 serves as the catalytic Nucleophile. Residue His-491 is the Proton acceptor of the active site.

The protein belongs to the peptidase C19 family. In terms of assembly, component of a deubiquitination module (DUB module) formed by ENY2, SGF11, and UBP22 in Arabidopsis. Interacts directly with SGF11, but not with ENY2.

It localises to the nucleus. It is found in the nucleoplasm. The catalysed reaction is Thiol-dependent hydrolysis of ester, thioester, amide, peptide and isopeptide bonds formed by the C-terminal Gly of ubiquitin (a 76-residue protein attached to proteins as an intracellular targeting signal).. Its function is as follows. Component of a deubiquitination module (DUB module) that specifically deubiquinates monoubiquinated histone H2B (H2Bub). Does not seem to be a component of the TREX-2 complex. Seems to act independently of the SAGA multiprotein complex. The DUB module is responsible for the major H2Bub deubiquitinase activity in Arabidopsis. This chain is Ubiquitin C-terminal hydrolase 22, found in Arabidopsis thaliana (Mouse-ear cress).